The sequence spans 403 residues: Putative gustatory receptor 98b (403 aa).

At 1 to 11 (MVAQKSRLLAR) the chain is on the cytoplasmic side. The chain crosses the membrane as a helical span at residues 12–32 (AFPYLDIFSVFALTPPPQSFG). Topologically, residues 33-48 (HTPHRRLRWYLMTGYV) are extracellular. Residues 49-69 (FYATAILATVFIVSYFNIIAI) form a helical membrane-spanning segment. At 70–83 (DEEVLEYNVSDFTR) the chain is on the cytoplasmic side. A helical membrane pass occupies residues 84–104 (VMGNIQKSLYSIMAIANHLNM). Residues 105–144 (LINYRRLGGIYKDIADLEMDMDEASQCFGGQRQRFSFRFR) are Extracellular-facing. The chain crosses the membrane as a helical span at residues 145 to 165 (MALCVGVWMILMVGSMPRLTM). Over 166 to 191 (TAMGPFVSTLLKILTEFVMIMQQLKS) the chain is Cytoplasmic. A helical membrane pass occupies residues 192–212 (LEYCVFVLIIYELVLRLRRTL). The Extracellular portion of the chain corresponds to 213-259 (SQLQEEFQDCEQQDMLQALCVALKRNQLLLGRIWRLEGDVGSYFTPT). The helical transmembrane segment at 260–280 (MLLLFLYNGLTILHMVNWAYI) threads the bilayer. Residues 281–365 (NKFLYDSCCQ…LRFTCGGLFD (85 aa)) are Cytoplasmic-facing. A helical membrane pass occupies residues 366-386 (INLKYFGGLLVTIFGYIIILI). The Extracellular portion of the chain corresponds to 387–403 (QFKVQAIAANRYKKVVN).

This sequence belongs to the insect chemoreceptor superfamily. Gustatory receptor (GR) family. Gr2a subfamily.

The protein resides in the cell membrane. Functionally, probable gustatory receptor which mediates acceptance or avoidance behavior, depending on its substrates. In Drosophila melanogaster (Fruit fly), this protein is Putative gustatory receptor 98b (Gr98b).